The sequence spans 248 residues: Adenosylcobinamide-GDP ribazoletransferase (248 aa).

Helical transmembrane passes span 24–44, 70–90, 106–126, 134–154, 157–177, 188–210, and 228–248; these read EINL…IGAW, IIIT…GLFS, VGAN…SLFL, IGWL…LLFA, TYAG…WWPV, LGLF…TIIY, and AGGQ…WGLI.

This sequence belongs to the CobS family. Mg(2+) serves as cofactor.

Its subcellular location is the cell membrane. It catalyses the reaction alpha-ribazole + adenosylcob(III)inamide-GDP = adenosylcob(III)alamin + GMP + H(+). The catalysed reaction is alpha-ribazole 5'-phosphate + adenosylcob(III)inamide-GDP = adenosylcob(III)alamin 5'-phosphate + GMP + H(+). Its pathway is cofactor biosynthesis; adenosylcobalamin biosynthesis; adenosylcobalamin from cob(II)yrinate a,c-diamide: step 7/7. In terms of biological role, joins adenosylcobinamide-GDP and alpha-ribazole to generate adenosylcobalamin (Ado-cobalamin). Also synthesizes adenosylcobalamin 5'-phosphate from adenosylcobinamide-GDP and alpha-ribazole 5'-phosphate. This chain is Adenosylcobinamide-GDP ribazoletransferase, found in Listeria monocytogenes serotype 4b (strain CLIP80459).